The chain runs to 355 residues: Guanine nucleotide-binding protein alpha-2 subunit (355 aa).

The interval 1–20 (MCFGGRGKDDEAEASRSREL) is disordered. One can recognise a G-alpha domain in the interval 33-355 (KEVKLLLLGA…IQRNLKQLIL (323 aa)). The segment at 36-49 (KLLLLGAGESGKST) is G1 motif. GTP is bound by residues Glu-44, Ser-45, Gly-46, Lys-47, Ser-48, Thr-49, Asp-151, Leu-176, Thr-182, Gly-204, Asn-270, Lys-271, Asp-273, and Ala-328. Residue Ser-48 participates in Mg(2+) binding. The tract at residues 174 to 182 (DLLRSRLRT) is G2 motif. A Mg(2+)-binding site is contributed by Thr-182. The G3 motif stretch occupies residues 197–206 (YRMFDVGGQR). Positions 266–273 (ILFLNKID) are G4 motif. Residues 326–331 (TNATDT) form a G5 motif region.

Belongs to the G-alpha family. G(q) subfamily. As to quaternary structure, g proteins are composed of 3 units; alpha, beta and gamma. The alpha chain contains the guanine nucleotide binding site. Mg(2+) is required as a cofactor.

Functionally, guanine nucleotide-binding proteins (G proteins) are involved as modulators or transducers in various transmembrane signaling systems. This chain is Guanine nucleotide-binding protein alpha-2 subunit (gna-2), found in Neurospora crassa (strain ATCC 24698 / 74-OR23-1A / CBS 708.71 / DSM 1257 / FGSC 987).